We begin with the raw amino-acid sequence, 225 residues long: Thymidylate kinase (225 aa).

10–17 (GGEGAGKT) provides a ligand contact to ATP.

Belongs to the thymidylate kinase family.

The enzyme catalyses dTMP + ATP = dTDP + ADP. Its function is as follows. Phosphorylation of dTMP to form dTDP in both de novo and salvage pathways of dTTP synthesis. In Oceanobacillus iheyensis (strain DSM 14371 / CIP 107618 / JCM 11309 / KCTC 3954 / HTE831), this protein is Thymidylate kinase.